The sequence spans 2507 residues: Putative neurobeachin homolog (2507 aa).

Disordered stretches follow at residues 1–109 (MEIS…PPLP), 1307–1377 (PSSP…DGGR), and 1629–1649 (SRHE…EISE). Positions 24 to 37 (PVEEGEEVNDEESN) are enriched in acidic residues. The span at 1317–1340 (TTQKQENSENVNSETSPENGSNGK) shows a compositional bias: polar residues. Positions 1360–1372 (DGEEEENGEEGQG) are enriched in acidic residues. The region spanning 1690–1798 (PSSQSACFST…AVKKVVYQLP (109 aa)) is the BEACH-type PH domain. The BEACH domain maps to 1817-2106 (MTPRQLFKHS…QLLTEAHPPR (290 aa)). WD repeat units follow at residues 2265 to 2308 (GHGD…GFIA), 2326 to 2365 (GHEA…LRRI), 2405 to 2444 (LVDD…KLYT), and 2447 to 2486 (PLNS…WHYE).

The protein belongs to the WD repeat neurobeachin family. As to quaternary structure, interacts with RII subunit of PKA. In terms of tissue distribution, expressed in vulval precursor cells and rectal epithelia in L2 and L3 larvae. In L4 larvae, expression is seen in intestinal epithelial cells.

The protein resides in the cytoplasm. The protein localises to the membrane. It localises to the nucleus. Binds to type II regulatory subunits of protein kinase A and anchors/targets them to the membrane. May anchor the kinase to cytoskeletal and/or organelle-associated proteins. Regulates endosomal traffic in polarized epithelial cells such as the vulval precursor cells and intestinal cells. Thought to act as a negative regulator of lin-12 activity in vulval precursor cells. May have a role in the internalization process from basolateral surface of polarized epithelial cells. In Caenorhabditis elegans, this protein is Putative neurobeachin homolog (sel-2).